The sequence spans 156 residues: Small ribosomal subunit protein uS7c (156 aa).

It belongs to the universal ribosomal protein uS7 family. In terms of assembly, part of the 30S ribosomal subunit.

The protein localises to the plastid. The protein resides in the chloroplast. One of the primary rRNA binding proteins, it binds directly to 16S rRNA where it nucleates assembly of the head domain of the 30S subunit. In Chlorokybus atmophyticus (Soil alga), this protein is Small ribosomal subunit protein uS7c (rps7).